Reading from the N-terminus, the 487-residue chain is Protein nucleotidyltransferase YdiU (487 aa).

The ATP site is built by glycine 86, glycine 88, arginine 89, lysine 109, aspartate 121, glycine 122, arginine 172, and arginine 179. The active-site Proton acceptor is the aspartate 248. Mg(2+) is bound by residues asparagine 249 and aspartate 258. Residue aspartate 258 participates in ATP binding.

This sequence belongs to the SELO family. Requires Mg(2+) as cofactor. It depends on Mn(2+) as a cofactor.

It carries out the reaction L-seryl-[protein] + ATP = 3-O-(5'-adenylyl)-L-seryl-[protein] + diphosphate. It catalyses the reaction L-threonyl-[protein] + ATP = 3-O-(5'-adenylyl)-L-threonyl-[protein] + diphosphate. The enzyme catalyses L-tyrosyl-[protein] + ATP = O-(5'-adenylyl)-L-tyrosyl-[protein] + diphosphate. The catalysed reaction is L-histidyl-[protein] + UTP = N(tele)-(5'-uridylyl)-L-histidyl-[protein] + diphosphate. It carries out the reaction L-seryl-[protein] + UTP = O-(5'-uridylyl)-L-seryl-[protein] + diphosphate. It catalyses the reaction L-tyrosyl-[protein] + UTP = O-(5'-uridylyl)-L-tyrosyl-[protein] + diphosphate. Its function is as follows. Nucleotidyltransferase involved in the post-translational modification of proteins. It can catalyze the addition of adenosine monophosphate (AMP) or uridine monophosphate (UMP) to a protein, resulting in modifications known as AMPylation and UMPylation. This is Protein nucleotidyltransferase YdiU from Sphingopyxis alaskensis (strain DSM 13593 / LMG 18877 / RB2256) (Sphingomonas alaskensis).